An 815-amino-acid chain; its full sequence is Probable receptor-like protein kinase At2g39360 (815 aa).

The signal sequence occupies residues 1–26 (MINLKLFLELKLCFLITLLCSSHISS). At 27–407 (VSDTFFINCG…SSSNKSSNTS (381 aa)) the chain is on the extracellular side. 11 N-linked (GlcNAc...) asparagine glycosylation sites follow: N40, N45, N125, N146, N209, N244, N277, N331, N355, N401, and N405. A helical transmembrane segment spans residues 408 to 428 (VGLIAGLSAALCVALVFGVVV). Topologically, residues 429–815 (SWWCIRKRRR…FAQMVREETR (387 aa)) are cytoplasmic. A Protein kinase domain is found at 487-761 (FDESLVIGVG…GDLLWNLEFM (275 aa)). ATP-binding positions include 493–501 (IGVGGFGKV) and K515. D612 (proton acceptor) is an active-site residue.

The protein belongs to the protein kinase superfamily. Ser/Thr protein kinase family.

Its subcellular location is the cell membrane. This is Probable receptor-like protein kinase At2g39360 from Arabidopsis thaliana (Mouse-ear cress).